We begin with the raw amino-acid sequence, 275 residues long: Large ribosomal subunit protein uL2 (275 aa).

The segment at 227–261 is disordered; that stretch reads PVDHPHGGGEAKSGQGNPHPVTPWGVPTKGYKTRK.

It belongs to the universal ribosomal protein uL2 family. As to quaternary structure, part of the 50S ribosomal subunit. Forms a bridge to the 30S subunit in the 70S ribosome.

Its function is as follows. One of the primary rRNA binding proteins. Required for association of the 30S and 50S subunits to form the 70S ribosome, for tRNA binding and peptide bond formation. It has been suggested to have peptidyltransferase activity; this is somewhat controversial. Makes several contacts with the 16S rRNA in the 70S ribosome. In Xylella fastidiosa (strain M23), this protein is Large ribosomal subunit protein uL2.